Here is a 268-residue protein sequence, read N- to C-terminus: Imidazole glycerol phosphate synthase subunit HisF (268 aa).

Active-site residues include Asp-12 and Asp-131.

It belongs to the HisA/HisF family. Heterodimer of HisH and HisF.

It localises to the cytoplasm. It carries out the reaction 5-[(5-phospho-1-deoxy-D-ribulos-1-ylimino)methylamino]-1-(5-phospho-beta-D-ribosyl)imidazole-4-carboxamide + L-glutamine = D-erythro-1-(imidazol-4-yl)glycerol 3-phosphate + 5-amino-1-(5-phospho-beta-D-ribosyl)imidazole-4-carboxamide + L-glutamate + H(+). Its pathway is amino-acid biosynthesis; L-histidine biosynthesis; L-histidine from 5-phospho-alpha-D-ribose 1-diphosphate: step 5/9. In terms of biological role, IGPS catalyzes the conversion of PRFAR and glutamine to IGP, AICAR and glutamate. The HisF subunit catalyzes the cyclization activity that produces IGP and AICAR from PRFAR using the ammonia provided by the HisH subunit. The protein is Imidazole glycerol phosphate synthase subunit HisF of Methanoculleus marisnigri (strain ATCC 35101 / DSM 1498 / JR1).